We begin with the raw amino-acid sequence, 121 residues long: Large ribosomal subunit protein uL14c (121 aa).

Belongs to the universal ribosomal protein uL14 family. In terms of assembly, part of the 50S ribosomal subunit.

It localises to the plastid. The protein localises to the chloroplast. Functionally, binds to 23S rRNA. This Emiliania huxleyi (Coccolithophore) protein is Large ribosomal subunit protein uL14c.